The primary structure comprises 336 residues: Phosphatidylglycerol--prolipoprotein diacylglyceryl transferase (336 aa).

The next 3 helical transmembrane spans lie at 16 to 36, 53 to 73, and 93 to 113; these read IGPV…VLAV, ILDI…IYHI, and IWNG…AAWA. R141 is a binding site for a 1,2-diacyl-sn-glycero-3-phospho-(1'-sn-glycerol). Transmembrane regions (helical) follow at residues 190–210, 220–240, and 253–273; these read PTFL…VFLG, GSLF…IEAL, and INVW…IVIQ.

Belongs to the Lgt family.

Its subcellular location is the cell membrane. The enzyme catalyses L-cysteinyl-[prolipoprotein] + a 1,2-diacyl-sn-glycero-3-phospho-(1'-sn-glycerol) = an S-1,2-diacyl-sn-glyceryl-L-cysteinyl-[prolipoprotein] + sn-glycerol 1-phosphate + H(+). It participates in protein modification; lipoprotein biosynthesis (diacylglyceryl transfer). Its function is as follows. Catalyzes the transfer of the diacylglyceryl group from phosphatidylglycerol to the sulfhydryl group of the N-terminal cysteine of a prolipoprotein, the first step in the formation of mature lipoproteins. The sequence is that of Phosphatidylglycerol--prolipoprotein diacylglyceryl transferase from Bifidobacterium adolescentis (strain ATCC 15703 / DSM 20083 / NCTC 11814 / E194a).